We begin with the raw amino-acid sequence, 216 residues long: MSHKPDDDYDYLFKVVLIGDSGVGKSNLLSRFTRNEFSLESKSTIGVEFATRSIQVDGKTIKAQIWDTAGQERYRAITSAYYRGAVGALLVYDITKSVTFENVERWLKELRDHADSNIVIMLVGNKSDLKHLRDVQTEVAQAFCEREGLSFIETSALESTNVEKAFQQILTEIYHIVSKKVLDSEDNRPKIGEGRDVIVIDNAHDDGGKKKGGCCS.

A GTP-binding site is contributed by 19–26 (GDSGVGKS). The Effector region motif lies at 41–49 (SKSTIGVEF). Residues 67 to 71 (DTAGQ) and 125 to 128 (NKSD) each bind GTP. S-geranylgeranyl cysteine attachment occurs at residues Cys-214 and Cys-215.

It belongs to the small GTPase superfamily. Rab family.

It localises to the cell membrane. In Chlamydomonas reinhardtii (Chlamydomonas smithii), this protein is Ras-related protein YPTC6 (YPTC6).